A 478-amino-acid chain; its full sequence is Glutamate--tRNA ligase (478 aa).

A 'HIGH' region motif is present at residues 9-19 (PSPTGLLHIGT). The short motif at 248-252 (KLSKR) is the 'KMSKS' region element. Residue K251 coordinates ATP.

It belongs to the class-I aminoacyl-tRNA synthetase family. Glutamate--tRNA ligase type 1 subfamily. Monomer.

The protein resides in the cytoplasm. It carries out the reaction tRNA(Glu) + L-glutamate + ATP = L-glutamyl-tRNA(Glu) + AMP + diphosphate. Catalyzes the attachment of glutamate to tRNA(Glu) in a two-step reaction: glutamate is first activated by ATP to form Glu-AMP and then transferred to the acceptor end of tRNA(Glu). The polypeptide is Glutamate--tRNA ligase (Prochlorococcus marinus subsp. pastoris (strain CCMP1986 / NIES-2087 / MED4)).